A 92-amino-acid chain; its full sequence is Small ribosomal subunit protein uS19c (92 aa).

This sequence belongs to the universal ribosomal protein uS19 family.

It is found in the plastid. Its subcellular location is the chloroplast. Protein S19 forms a complex with S13 that binds strongly to the 16S ribosomal RNA. This Cucumis sativus (Cucumber) protein is Small ribosomal subunit protein uS19c.